Consider the following 316-residue polypeptide: Beta-ketoacyl-[acyl-carrier-protein] synthase III (316 aa).

Active-site residues include C112 and H243. The segment at 244–248 (QANIR) is ACP-binding. N273 is an active-site residue.

The protein belongs to the thiolase-like superfamily. FabH family. As to quaternary structure, homodimer.

The protein resides in the cytoplasm. It carries out the reaction malonyl-[ACP] + acetyl-CoA + H(+) = 3-oxobutanoyl-[ACP] + CO2 + CoA. The protein operates within lipid metabolism; fatty acid biosynthesis. In terms of biological role, catalyzes the condensation reaction of fatty acid synthesis by the addition to an acyl acceptor of two carbons from malonyl-ACP. Catalyzes the first condensation reaction which initiates fatty acid synthesis and may therefore play a role in governing the total rate of fatty acid production. Possesses both acetoacetyl-ACP synthase and acetyl transacylase activities. Its substrate specificity determines the biosynthesis of branched-chain and/or straight-chain of fatty acids. In Haemophilus ducreyi (strain 35000HP / ATCC 700724), this protein is Beta-ketoacyl-[acyl-carrier-protein] synthase III.